The following is a 250-amino-acid chain: tRNA (guanine-N(1)-)-methyltransferase (250 aa).

S-adenosyl-L-methionine-binding positions include Gly-116 and 136–141 (IGDYVL).

This sequence belongs to the RNA methyltransferase TrmD family. Homodimer.

It localises to the cytoplasm. The enzyme catalyses guanosine(37) in tRNA + S-adenosyl-L-methionine = N(1)-methylguanosine(37) in tRNA + S-adenosyl-L-homocysteine + H(+). Its function is as follows. Specifically methylates guanosine-37 in various tRNAs. This Pseudomonas entomophila (strain L48) protein is tRNA (guanine-N(1)-)-methyltransferase.